The chain runs to 187 residues: Cell division protein SepF (187 aa).

Belongs to the SepF family. Homodimer. Interacts with FtsZ.

Its subcellular location is the cytoplasm. In terms of biological role, cell division protein that is part of the divisome complex and is recruited early to the Z-ring. Probably stimulates Z-ring formation, perhaps through the cross-linking of FtsZ protofilaments. Its function overlaps with FtsA. This Streptococcus suis (strain 98HAH33) protein is Cell division protein SepF.